Consider the following 875-residue polypeptide: Neurotrypsin (875 aa).

Residues 1-20 (MTLARFVLALMLGALPEVVG) form the signal peptide. N-linked (GlcNAc...) asparagine glycosylation is present at Asn-26. The interval 29–88 (LHHSHRHSPPAGPHYPYYLPTQQRPPRTRPPPPLPRFPRPPRALPAQRPHALQAGHTPRP) is disordered. Pro residues predominate over residues 56–71 (TRPPPPLPRFPRPPRA). One can recognise a Kringle domain in the interval 93–165 (CPAGEPWVSV…GKVDWGYCDC (73 aa)). 20 disulfide bridges follow: Cys-93–Cys-165, Cys-109–Cys-149, Cys-138–Cys-163, Cys-195–Cys-259, Cys-208–Cys-269, Cys-239–Cys-249, Cys-305–Cys-369, Cys-318–Cys-379, Cys-349–Cys-359, Cys-412–Cys-475, Cys-425–Cys-485, Cys-455–Cys-465, Cys-525–Cys-589, Cys-538–Cys-599, Cys-569–Cys-579, Cys-619–Cys-750, Cys-661–Cys-677, Cys-765–Cys-831, Cys-794–Cys-808, and Cys-821–Cys-850. 4 consecutive SRCR domains span residues 170–271 (VRLR…TCSF), 280–381 (IRLA…SCTP), 387–487 (IRLA…ACYP), and 500–601 (VRLM…ICDY). The zymogen activation region stretch occupies residues 619 to 630 (CGLRLLHRRQKR). A Peptidase S1 domain is found at 631-874 (IIGGKNSLRG…FVPWIKSVTK (244 aa)). His-676 serves as the catalytic Charge relay system. Asn-683 carries N-linked (GlcNAc...) asparagine glycosylation. Catalysis depends on Asp-726, which acts as the Charge relay system. Ser-825 serves as the catalytic Charge relay system.

Belongs to the peptidase S1 family. In terms of tissue distribution, brain and Leydig cells of the testis.

The protein localises to the secreted. Plays a role in neuronal plasticity and the proteolytic action may subserve structural reorganizations associated with learning and memory operations. The chain is Neurotrypsin (PRSS12) from Homo sapiens (Human).